Reading from the N-terminus, the 334-residue chain is MSGFYHKHFLKLLDFTPAELNSLLQLAAKLKADKKSGKEEAKLTGKNIALIFEKDSTRTRCSFEVAAYDQGARVTYLGPSGSQIGHKESIKDTARVLGRMYDGIQYRGYGQEIVETLAEYAGVPVWNGLTNEFHPTQLLADLLTMQEHLPGKAFNEMTLVYAGDARNNMGNSMLEAAALTGLGLRLVAPQACWPEAALVTECRALAQQNGGNITLTEDVAQGVEGADFIYTDVWVSMGEAKEKWAERIALLRDYQVNNKMMQLTGNPEVKFLHCLPAFHDDQTTLGKKMAEEFGLHGGMEVTDEVFESAASIVFDQAENRMHTIKAVMVATLSK.

Residues 56 to 59 (STRT), glutamine 83, arginine 107, and 134 to 137 (HPTQ) contribute to the carbamoyl phosphate site. L-ornithine is bound by residues asparagine 168, aspartate 232, and 236–237 (SM). Residues 274 to 275 (CL) and arginine 320 each bind carbamoyl phosphate.

This sequence belongs to the aspartate/ornithine carbamoyltransferase superfamily. OTCase family.

The protein localises to the cytoplasm. The enzyme catalyses carbamoyl phosphate + L-ornithine = L-citrulline + phosphate + H(+). Its pathway is amino-acid biosynthesis; L-arginine biosynthesis; L-arginine from L-ornithine and carbamoyl phosphate: step 1/3. Its function is as follows. Reversibly catalyzes the transfer of the carbamoyl group from carbamoyl phosphate (CP) to the N(epsilon) atom of ornithine (ORN) to produce L-citrulline. In Shigella dysenteriae serotype 1 (strain Sd197), this protein is Ornithine carbamoyltransferase.